We begin with the raw amino-acid sequence, 264 residues long: S-adenosylmethionine decarboxylase proenzyme (264 aa).

S112 functions as the Schiff-base intermediate with substrate; via pyruvic acid in the catalytic mechanism. S112 bears the Pyruvic acid (Ser); by autocatalysis mark. The active-site Proton acceptor; for processing activity is the H117. C140 (proton donor; for catalytic activity) is an active-site residue.

The protein belongs to the prokaryotic AdoMetDC family. Type 2 subfamily. In terms of assembly, heterooctamer of four alpha and four beta chains arranged as a tetramer of alpha/beta heterodimers. Pyruvate is required as a cofactor. Post-translationally, is synthesized initially as an inactive proenzyme. Formation of the active enzyme involves a self-maturation process in which the active site pyruvoyl group is generated from an internal serine residue via an autocatalytic post-translational modification. Two non-identical subunits are generated from the proenzyme in this reaction, and the pyruvate is formed at the N-terminus of the alpha chain, which is derived from the carboxyl end of the proenzyme. The post-translation cleavage follows an unusual pathway, termed non-hydrolytic serinolysis, in which the side chain hydroxyl group of the serine supplies its oxygen atom to form the C-terminus of the beta chain, while the remainder of the serine residue undergoes an oxidative deamination to produce ammonia and the pyruvoyl group blocking the N-terminus of the alpha chain.

The catalysed reaction is S-adenosyl-L-methionine + H(+) = S-adenosyl 3-(methylsulfanyl)propylamine + CO2. It participates in amine and polyamine biosynthesis; S-adenosylmethioninamine biosynthesis; S-adenosylmethioninamine from S-adenosyl-L-methionine: step 1/1. In terms of biological role, catalyzes the decarboxylation of S-adenosylmethionine to S-adenosylmethioninamine (dcAdoMet), the propylamine donor required for the synthesis of the polyamines spermine and spermidine from the diamine putrescine. The sequence is that of S-adenosylmethionine decarboxylase proenzyme from Shigella boydii serotype 4 (strain Sb227).